A 354-amino-acid chain; its full sequence is NAD-dependent protein deacetylase hst2-2 (354 aa).

The Deacetylase sirtuin-type domain occupies 16–279 (QCQNQTTLDS…REVARHLGWD (264 aa)). NAD(+) is bound by residues 43-63 (GAGLSTSSGLADFRTPDTGLY) and 126-129 (QNID). Histidine 146 functions as the Proton acceptor in the catalytic mechanism. Zn(2+)-binding residues include cysteine 154, cysteine 157, cysteine 178, and cysteine 183. Residues 220-222 (GTS), 245-247 (NRE), and cysteine 265 each bind NAD(+).

The protein belongs to the sirtuin family. Class I subfamily. Requires Zn(2+) as cofactor.

The protein resides in the nucleus. The catalysed reaction is N(6)-acetyl-L-lysyl-[protein] + NAD(+) + H2O = 2''-O-acetyl-ADP-D-ribose + nicotinamide + L-lysyl-[protein]. NAD-dependent histone deacetylase, which could function in telomeric silencing, cell cycle progression and chromosome stability. The polypeptide is NAD-dependent protein deacetylase hst2-2 (Emericella nidulans (strain FGSC A4 / ATCC 38163 / CBS 112.46 / NRRL 194 / M139) (Aspergillus nidulans)).